The chain runs to 229 residues: Cytidylate kinase (229 aa).

12–20 (GPSGAGKGT) serves as a coordination point for ATP.

This sequence belongs to the cytidylate kinase family. Type 1 subfamily.

It is found in the cytoplasm. The enzyme catalyses CMP + ATP = CDP + ADP. It catalyses the reaction dCMP + ATP = dCDP + ADP. This Pseudomonas aeruginosa (strain UCBPP-PA14) protein is Cytidylate kinase.